Consider the following 238-residue polypeptide: Sugar fermentation stimulation protein homolog (238 aa).

It belongs to the SfsA family.

The sequence is that of Sugar fermentation stimulation protein homolog from Pseudomonas entomophila (strain L48).